The following is a 596-amino-acid chain: NADH-quinone oxidoreductase subunit C/D (596 aa).

Positions 1–186 (MVDIMCNDST…NPFILTKQKE (186 aa)) are NADH dehydrogenase I subunit C. The interval 210-596 (NFMFLNLGPN…IDFVMSDVDR (387 aa)) is NADH dehydrogenase I subunit D.

It in the N-terminal section; belongs to the complex I 30 kDa subunit family. This sequence in the C-terminal section; belongs to the complex I 49 kDa subunit family. NDH-1 is composed of 13 different subunits. Subunits NuoB, CD, E, F, and G constitute the peripheral sector of the complex.

The protein localises to the cell inner membrane. It catalyses the reaction a quinone + NADH + 5 H(+)(in) = a quinol + NAD(+) + 4 H(+)(out). Its function is as follows. NDH-1 shuttles electrons from NADH, via FMN and iron-sulfur (Fe-S) centers, to quinones in the respiratory chain. The immediate electron acceptor for the enzyme in this species is believed to be ubiquinone. Couples the redox reaction to proton translocation (for every two electrons transferred, four hydrogen ions are translocated across the cytoplasmic membrane), and thus conserves the redox energy in a proton gradient. This Blochmanniella pennsylvanica (strain BPEN) protein is NADH-quinone oxidoreductase subunit C/D.